The primary structure comprises 121 residues: Large ribosomal subunit protein bL12 (121 aa).

This sequence belongs to the bacterial ribosomal protein bL12 family. Homodimer. Part of the ribosomal stalk of the 50S ribosomal subunit. Forms a multimeric L10(L12)X complex, where L10 forms an elongated spine to which 2 to 4 L12 dimers bind in a sequential fashion. Binds GTP-bound translation factors.

In terms of biological role, forms part of the ribosomal stalk which helps the ribosome interact with GTP-bound translation factors. Is thus essential for accurate translation. This Pectobacterium carotovorum subsp. carotovorum (strain PC1) protein is Large ribosomal subunit protein bL12.